The sequence spans 258 residues: tRNA pseudouridine synthase A (258 aa).

The active-site Nucleophile is the Asp-53. Tyr-111 contributes to the substrate binding site.

The protein belongs to the tRNA pseudouridine synthase TruA family. Homodimer.

It catalyses the reaction uridine(38/39/40) in tRNA = pseudouridine(38/39/40) in tRNA. Formation of pseudouridine at positions 38, 39 and 40 in the anticodon stem and loop of transfer RNAs. This chain is tRNA pseudouridine synthase A, found in Streptococcus agalactiae serotype III (strain NEM316).